We begin with the raw amino-acid sequence, 848 residues long: Neprilysin-11 (848 aa).

Residues 1–74 lie on the Cytoplasmic side of the membrane; it reads MPFGNDPPDY…WWKSRTTMEK (74 aa). A helical; Signal-anchor for type II membrane protein membrane pass occupies residues 75 to 95; that stretch reads LLLPVLLLFCLLTAVLLAVII. Residues 96 to 848 are Extracellular-facing; sequence NTDKRIEAMK…VNPDHKCIVW (753 aa). The disordered stretch occupies residues 108-161; the sequence is HATQTEHAGFGDPTENPTKTAEDPRVPPIVPEAPTSPEPEVTTSTEKPKEPEVC. Residues 133–144 are compositionally biased toward pro residues; sequence VPPIVPEAPTSP. Positions 160–848 constitute a Peptidase M13 domain; sequence VCSTPGCVRA…VNPDHKCIVW (689 aa). An intrachain disulfide couples cysteine 161 to cysteine 166. 8 N-linked (GlcNAc...) asparagine glycosylation sites follow: asparagine 178, asparagine 249, asparagine 284, asparagine 312, asparagine 337, asparagine 364, asparagine 398, and asparagine 438. 4 disulfide bridges follow: cysteine 184-cysteine 833, cysteine 192-cysteine 793, cysteine 247-cysteine 509, and cysteine 719-cysteine 845. Histidine 682 is a Zn(2+) binding site. Glutamate 683 is an active-site residue. Histidine 686 is a Zn(2+) binding site. Asparagine 726 is a glycosylation site (N-linked (GlcNAc...) asparagine). Glutamate 744 serves as a coordination point for Zn(2+). The active-site Proton donor is the aspartate 748.

It belongs to the peptidase M13 family. Zn(2+) is required as a cofactor.

It is found in the cell membrane. Its function is as follows. Probable cell surface protease. This is Neprilysin-11 (nep-11) from Caenorhabditis elegans.